The primary structure comprises 445 residues: Rab GDP dissociation inhibitor beta (445 aa).

Position 1 is an N-acetylmethionine (Met1). Lys57 is subject to N6-succinyllysine. Position 112 is an N6-acetyllysine (Lys112). Ser130 is subject to Phosphoserine. An N6-acetyllysine modification is found at Lys269. At Ser382 the chain carries Phosphoserine.

Belongs to the Rab GDI family. As to quaternary structure, interacts with RHOH. Interacts with the GDP-bound inactive forms of RAB3A, RAB3B, RAB3C, RAB5A, RAB5B, RAB5C, RAB8A, RAB8B, RAB10, RAB12, RAB35, and RAB43; binds RAB3D to a lesser extent. Interacts with DZIP1; this interaction negatively regulates the interaction of GDI2 with GDP-bound RAB8A.

Its subcellular location is the cytoplasm. The protein localises to the membrane. The protein resides in the golgi apparatus. It is found in the trans-Golgi network. Functionally, GDP-dissociation inhibitor preventing the GDP to GTP exchange of most Rab proteins. By keeping these small GTPases in their inactive GDP-bound form regulates intracellular membrane trafficking. Negatively regulates protein transport to the cilium and ciliogenesis through the inhibition of RAB8A. This chain is Rab GDP dissociation inhibitor beta (GDI2), found in Canis lupus familiaris (Dog).